Reading from the N-terminus, the 662-residue chain is Glutathione hydrolase 7 (662 aa).

The Cytoplasmic segment spans residues 1–106 (MAAENEASQE…AAECSCRQDG (106 aa)). Phosphoserine is present on residues Ser17, Ser72, Ser79, and Ser83. The interval 26–90 (SFPRLPEDEP…DGSPLRETRK (65 aa)) is disordered. Over residues 72–83 (SSSSEMGSQDGS) the composition is skewed to low complexity. The helical; Signal-anchor for type II membrane protein transmembrane segment at 107–127 (LTVIVTACLTFATGVTVALVM) threads the bilayer. The Extracellular portion of the chain corresponds to 128–662 (QIYFGDPQIF…SPDAAGATIL (535 aa)). 9 N-linked (GlcNAc...) asparagine glycosylation sites follow: Asn198, Asn267, Asn283, Asn330, Asn353, Asn394, Asn519, Asn523, and Asn586.

Belongs to the gamma-glutamyltransferase family. Heterodimer composed of the light and heavy chains. The active site is located in the light chain. Post-translationally, cleaved by autocatalysis into a large and a small subunit and the autocatalytic cleavage is essential to the functional activation of the enzyme.

Its subcellular location is the membrane. It catalyses the reaction an N-terminal (5-L-glutamyl)-[peptide] + an alpha-amino acid = 5-L-glutamyl amino acid + an N-terminal L-alpha-aminoacyl-[peptide]. It carries out the reaction glutathione + H2O = L-cysteinylglycine + L-glutamate. The enzyme catalyses an S-substituted glutathione + H2O = an S-substituted L-cysteinylglycine + L-glutamate. It functions in the pathway sulfur metabolism; glutathione metabolism. In terms of biological role, hydrolyzes and transfers gamma-glutamyl moieties from glutathione and other gamma-glutamyl compounds to acceptors. The protein is Glutathione hydrolase 7 of Mus musculus (Mouse).